The primary structure comprises 1481 residues: Protein shortage in chiasmata 1 ortholog (1481 aa).

Disordered stretches follow at residues 479 to 498 (TDVH…EKEV) and 512 to 560 (KSKV…IQAS). Over residues 513 to 531 (SKVEANPKNDQEPEARIMQ) the composition is skewed to basic and acidic residues. Residues 543-560 (SSQVPSAESASSSQIQAS) show a composition bias toward low complexity.

This sequence belongs to the XPF family. Highly divergent. As to quaternary structure, interacts with TEX11. Interacts with SPO16. In terms of tissue distribution, mainly expressed in adult testis.

It is found in the chromosome. ATPase required during meiosis for the formation of crossover recombination intermediates. Binds DNA: preferentially binds to single-stranded DNA and DNA branched structures. Does not show nuclease activity in vitro, but shows ATPase activity, which is stimulated by the presence of single-stranded DNA. Plays a key role in homologous recombination and crossing-over in meiotic prophase I in male and female germ cells. Required for proper synaptonemal complex assembly and homologous chromosome pairing. Required for recruitment of TEX11 and MSH4 to recombination intermediates. The polypeptide is Protein shortage in chiasmata 1 ortholog (Mus musculus (Mouse)).